Consider the following 303-residue polypeptide: MNGIIPLYKERGLTSFDCVAKLRHILQTKKVGHSGTLDPSVDGVLPICIGSATKVVPYLMASGKVYRGSVTLGLATTTEDLDGDVVERQPLERPFTADQVAAAAQALTGTIQQTPPMYSAVKVNGRKLYEYARAGETVERPTRTITVDRFDLQGAGTFDATAGTQTIDFEIACSKGTYVRTLAVDLGQQLGVPAVMATLTRLKSGGFTLSQTVTLADVEAAMADDQIERTLRPIDYALQDYPHVALDEHLWALVKNGVFLSAAELNQATEPELALTYQGETKCLYRWSDEKKQYRPLKMFAVN.

Residue Asp-38 is the Nucleophile of the active site.

The protein belongs to the pseudouridine synthase TruB family. Type 1 subfamily.

It catalyses the reaction uridine(55) in tRNA = pseudouridine(55) in tRNA. Its function is as follows. Responsible for synthesis of pseudouridine from uracil-55 in the psi GC loop of transfer RNAs. The polypeptide is tRNA pseudouridine synthase B (Levilactobacillus brevis (strain ATCC 367 / BCRC 12310 / CIP 105137 / JCM 1170 / LMG 11437 / NCIMB 947 / NCTC 947) (Lactobacillus brevis)).